Consider the following 315-residue polypeptide: Homoserine kinase (315 aa).

Residue 97–107 (PPARGLGSSAT) coordinates ATP.

This sequence belongs to the GHMP kinase family. Homoserine kinase subfamily.

The protein localises to the cytoplasm. It catalyses the reaction L-homoserine + ATP = O-phospho-L-homoserine + ADP + H(+). It functions in the pathway amino-acid biosynthesis; L-threonine biosynthesis; L-threonine from L-aspartate: step 4/5. Its function is as follows. Catalyzes the ATP-dependent phosphorylation of L-homoserine to L-homoserine phosphate. In Prochlorococcus marinus subsp. pastoris (strain CCMP1986 / NIES-2087 / MED4), this protein is Homoserine kinase.